The sequence spans 138 residues: MLSPKRTKYRKAHKGRIHGLAKGGTTLNFGAFGLKALEPERVTARQIEASRRAITRAMKRAGRVWIRIFPDLPVSTKPAEVRMGSGKGSPEYWVARVKPGRILFEIEGVPPELARQALALGAAKLPIKTKFVTRIGEA.

This sequence belongs to the universal ribosomal protein uL16 family. As to quaternary structure, part of the 50S ribosomal subunit.

Functionally, binds 23S rRNA and is also seen to make contacts with the A and possibly P site tRNAs. This is Large ribosomal subunit protein uL16 from Gluconacetobacter diazotrophicus (strain ATCC 49037 / DSM 5601 / CCUG 37298 / CIP 103539 / LMG 7603 / PAl5).